The chain runs to 433 residues: 23S rRNA (uracil(1939)-C(5))-methyltransferase RlmD (433 aa).

One can recognise a TRAM domain in the interval Arg10–Arg68. 4 residues coordinate [4Fe-4S] cluster: Cys81, Cys87, Cys90, and Cys162. Residues Gln265, Phe294, Asn299, Glu315, Asn342, and Asp363 each contribute to the S-adenosyl-L-methionine site. Cys389 serves as the catalytic Nucleophile.

Belongs to the class I-like SAM-binding methyltransferase superfamily. RNA M5U methyltransferase family. RlmD subfamily.

The catalysed reaction is uridine(1939) in 23S rRNA + S-adenosyl-L-methionine = 5-methyluridine(1939) in 23S rRNA + S-adenosyl-L-homocysteine + H(+). In terms of biological role, catalyzes the formation of 5-methyl-uridine at position 1939 (m5U1939) in 23S rRNA. The sequence is that of 23S rRNA (uracil(1939)-C(5))-methyltransferase RlmD from Shigella flexneri.